The sequence spans 218 residues: Zinc metalloproteinase-disintegrin-like bothrojarin-2 (218 aa).

In terms of domain architecture, Disintegrin spans 14 to 100 (PPVCGNELLE…QCPTDDFHKN (87 aa)). V16, L21, E23, E26, and D29 together coordinate Ca(2+). 10 disulfides stabilise this stretch: C28–C46, C30–C41, C40–C63, C54–C60, C59–C85, C72–C92, C79–C111, C104–C116, C123–C173, and C151–C161. Positions 78–80 (ECD) match the D/ECD-tripeptide motif.

Belongs to the venom metalloproteinase (M12B) family. P-III subfamily. P-IIIa sub-subfamily. Monomer. Requires Zn(2+) as cofactor. Post-translationally, glycosylated. In terms of tissue distribution, expressed by the venom gland.

The protein resides in the secreted. Its function is as follows. The hemorrhagic metalloproteinase-disintegrin-like bothrojarin-1 is a potent inhibitor of collagen-induced platelet aggregation by blockage of alpha-2/beta-1 (ITGA2/ITGB1) integrin. It does not present any fibrinogen-clotting activity. This chain is Zinc metalloproteinase-disintegrin-like bothrojarin-2, found in Bothrops jararaca (Jararaca).